A 297-amino-acid chain; its full sequence is Putative F-box protein At2g19630 (297 aa).

Residues 11 to 60 (TKNSLQIPIDLIIEIFLRLSVNSIARCRCVSKQWASTLSRPYFTELFLTR) enclose the F-box domain.

In Arabidopsis thaliana (Mouse-ear cress), this protein is Putative F-box protein At2g19630.